The sequence spans 291 residues: Ribose-phosphate pyrophosphokinase (291 aa).

ATP-binding positions include 34–36 (DGE) and 93–94 (RQ). H127 and D165 together coordinate Mg(2+). The active site involves K188. D-ribose 5-phosphate contacts are provided by residues R190, D216, and 220–224 (STGGT).

The protein belongs to the ribose-phosphate pyrophosphokinase family. Class III (archaeal) subfamily. Mg(2+) serves as cofactor.

The protein resides in the cytoplasm. It carries out the reaction D-ribose 5-phosphate + ATP = 5-phospho-alpha-D-ribose 1-diphosphate + AMP + H(+). It functions in the pathway metabolic intermediate biosynthesis; 5-phospho-alpha-D-ribose 1-diphosphate biosynthesis; 5-phospho-alpha-D-ribose 1-diphosphate from D-ribose 5-phosphate (route I): step 1/1. In terms of biological role, involved in the biosynthesis of the central metabolite phospho-alpha-D-ribosyl-1-pyrophosphate (PRPP) via the transfer of pyrophosphoryl group from ATP to 1-hydroxyl of ribose-5-phosphate (Rib-5-P). The polypeptide is Ribose-phosphate pyrophosphokinase (Sulfurisphaera tokodaii (strain DSM 16993 / JCM 10545 / NBRC 100140 / 7) (Sulfolobus tokodaii)).